The following is a 37-amino-acid chain: Antifungal protein 4 (37 aa).

It is found in the secreted. Functionally, possesses antifungal activity against P.infestans but not F.graminearum. The chain is Antifungal protein 4 from Malva parviflora (Little mallow).